The following is a 284-amino-acid chain: L-ribulose-5-phosphate 3-epimerase UlaE (284 aa).

The protein belongs to the L-ribulose-5-phosphate 3-epimerase family.

The enzyme catalyses L-ribulose 5-phosphate = L-xylulose 5-phosphate. The protein operates within cofactor degradation; L-ascorbate degradation; D-xylulose 5-phosphate from L-ascorbate: step 3/4. Its function is as follows. Catalyzes the isomerization of L-xylulose-5-phosphate to L-ribulose-5-phosphate. Is involved in the anaerobic L-ascorbate utilization. The polypeptide is L-ribulose-5-phosphate 3-epimerase UlaE (Shigella sonnei (strain Ss046)).